The primary structure comprises 932 residues: Eukaryotic translation initiation factor 3 subunit A (932 aa).

One can recognise a PCI domain in the interval 309–492 (KPATANFVIL…NSISFSSDLF (184 aa)). Residues Ser-374 and Ser-501 each carry the phosphoserine modification. A coiled-coil region spans residues 537 to 862 (LRKQQAEAAY…DEEISRKLAE (326 aa)). Over residues 793 to 865 (AEEEAARAAE…ISRKLAEKAA (73 aa)) the composition is skewed to basic and acidic residues. The disordered stretch occupies residues 793-932 (AEEEAARAAE…PPSRRNQQQQ (140 aa)). 3 positions are modified to phosphoserine: Ser-874, Ser-875, and Ser-877. Residues 877 to 893 (SPGAWRRGGASAGGVSR) show a composition bias toward low complexity.

Belongs to the eIF-3 subunit A family. As to quaternary structure, component of the eukaryotic translation initiation factor 3 (eIF-3) complex. The eIF-3 complex appears to include tif32/eif3a, SPAC25G10.08/eif3b, tif33/eif3c, SPBC4C3.07/eif3f, tif35/eif3g and sum1/eif3i. This set of common subunits may also associate exclusively with either moe1/eif3d and int6/eif3e, or with SPAC821.05/eif3h and SPAC1751.03/eif3m. The eIF-3 complex may also include SPAC3A12.13c/eif3j.

It localises to the cytoplasm. Functionally, RNA-binding component of the eukaryotic translation initiation factor 3 (eIF-3) complex, which is involved in protein synthesis of a specialized repertoire of mRNAs and, together with other initiation factors, stimulates binding of mRNA and methionyl-tRNAi to the 40S ribosome. The eIF-3 complex specifically targets and initiates translation of a subset of mRNAs involved in cell proliferation. This chain is Eukaryotic translation initiation factor 3 subunit A (tif32), found in Schizosaccharomyces pombe (strain 972 / ATCC 24843) (Fission yeast).